Here is a 1234-residue protein sequence, read N- to C-terminus: Formin-like protein 3 (1234 aa).

A Phosphatase tensin-type domain is found at methionine 1 to proline 208. The active-site Phosphocysteine intermediate is the cysteine 141. A C2 tensin-type domain is found at glutamate 214–leucine 352. 2 disordered regions span residues aspartate 443 to histidine 478 and leucine 492 to leucine 840. Over residues valine 498–cysteine 507 the composition is skewed to pro residues. The segment covering valine 524–leucine 534 has biased composition (basic and acidic residues). Pro residues-rich tracts occupy residues serine 536–proline 576, glutamine 584–proline 656, proline 663–arginine 673, glycine 688–proline 699, proline 709–alanine 721, alanine 729–proline 739, and proline 762–leucine 784. Residues glutamine 827–threonine 1226 enclose the FH2 domain.

This sequence belongs to the formin-like family. Class-II subfamily.

This Oryza sativa subsp. japonica (Rice) protein is Formin-like protein 3 (FH3).